A 172-amino-acid polypeptide reads, in one-letter code: C-phycocyanin-2 beta subunit (172 aa).

Asparagine 72 bears the N4-methylasparagine mark. Residues cysteine 82 and cysteine 153 each coordinate (2R,3E)-phycocyanobilin.

It belongs to the phycobiliprotein family. In terms of assembly, heterodimer of an alpha and a beta subunit, which further assembles into trimers and the trimers into hexamers. Contains two covalently linked bilin chromophores.

The protein resides in the cellular thylakoid membrane. Functionally, light-harvesting photosynthetic bile pigment-protein from the phycobiliprotein complex (phycobilisome, PBS). Phycocyanin is the major phycobiliprotein in the PBS rod. The protein is C-phycocyanin-2 beta subunit (cpcB2) of Microchaete diplosiphon (Fremyella diplosiphon).